We begin with the raw amino-acid sequence, 929 residues long: Isoleucine--tRNA ligase (929 aa).

Residues 58–68 (PYANGDIHIGH) carry the 'HIGH' region motif. L-isoleucyl-5'-AMP is bound at residue glutamate 563. The 'KMSKS' region signature appears at 605–609 (KMSKS). Residue lysine 608 participates in ATP binding. Residues cysteine 892, cysteine 895, cysteine 912, and cysteine 915 each coordinate Zn(2+).

It belongs to the class-I aminoacyl-tRNA synthetase family. IleS type 1 subfamily. As to quaternary structure, monomer. Zn(2+) serves as cofactor.

The protein localises to the cytoplasm. The enzyme catalyses tRNA(Ile) + L-isoleucine + ATP = L-isoleucyl-tRNA(Ile) + AMP + diphosphate. Catalyzes the attachment of isoleucine to tRNA(Ile). As IleRS can inadvertently accommodate and process structurally similar amino acids such as valine, to avoid such errors it has two additional distinct tRNA(Ile)-dependent editing activities. One activity is designated as 'pretransfer' editing and involves the hydrolysis of activated Val-AMP. The other activity is designated 'posttransfer' editing and involves deacylation of mischarged Val-tRNA(Ile). This chain is Isoleucine--tRNA ligase, found in Neisseria gonorrhoeae (strain NCCP11945).